Consider the following 532-residue polypeptide: Bifunctional purine biosynthesis protein PurH (532 aa).

Residues 1 to 147 (MAKIKRALIS…KNYRSVTVVT (147 aa)) form the MGS-like domain.

It belongs to the PurH family.

It catalyses the reaction (6R)-10-formyltetrahydrofolate + 5-amino-1-(5-phospho-beta-D-ribosyl)imidazole-4-carboxamide = 5-formamido-1-(5-phospho-D-ribosyl)imidazole-4-carboxamide + (6S)-5,6,7,8-tetrahydrofolate. The catalysed reaction is IMP + H2O = 5-formamido-1-(5-phospho-D-ribosyl)imidazole-4-carboxamide. Its pathway is purine metabolism; IMP biosynthesis via de novo pathway; 5-formamido-1-(5-phospho-D-ribosyl)imidazole-4-carboxamide from 5-amino-1-(5-phospho-D-ribosyl)imidazole-4-carboxamide (10-formyl THF route): step 1/1. It functions in the pathway purine metabolism; IMP biosynthesis via de novo pathway; IMP from 5-formamido-1-(5-phospho-D-ribosyl)imidazole-4-carboxamide: step 1/1. The sequence is that of Bifunctional purine biosynthesis protein PurH from Magnetococcus marinus (strain ATCC BAA-1437 / JCM 17883 / MC-1).